The following is a 575-amino-acid chain: Developmental and secondary metabolism regulator VEL1 (575 aa).

The region spanning 21–225 is the Velvet domain; the sequence is GRKLKYTLTV…AEQGCRVRIR (205 aa). A Nuclear localization signal motif is present at residues 35 to 40; the sequence is ERARAC. Disordered regions lie at residues 36-56 and 227-402; these read RARA…VDPP and DVRM…QSYE. The span at 274–284 shows a compositional bias: basic and acidic residues; it reads VHEDPQQRRGS. Over residues 294–308 the composition is skewed to polar residues; the sequence is VVNTPFRTPSISPST. Over residues 334 to 346 the composition is skewed to pro residues; it reads IQPPHPPPPPPSS. Polar residues-rich tracts occupy residues 355–365 and 385–402; these read HHNQGPSTQFR and SYSQ…QSYE. Residues 465-509 are PEST; it reads AEQPLAMSPLASVTSISRGTQNSAPMPSHNYNKLERSGSYSQYAP. The segment at 513-549 is disordered; that stretch reads EAPKSTNKRSFNDVFSTPTESLSNGRRPSAIGIDIEE. The span at 516-538 shows a compositional bias: polar residues; the sequence is KSTNKRSFNDVFSTPTESLSNGR.

Belongs to the velvet family. VeA subfamily. As to quaternary structure, component of the heterotrimeric velvet complex composed of LAE1, VEL1 and VEL2; VEL1 acting as a bridging protein between LAE1 and VEL2.

It is found in the nucleus. The protein localises to the cytoplasm. Its function is as follows. Component of the velvet transcription factor complex that controls sexual/asexual developmental ratio in response to light, promoting sexual development in the darkness while stimulating asexual sporulation under illumination. The velvet complex hat acts as a global regulator for secondary metabolite gene expression. Controls the expression of the oxalic acid and melanin gene clusters. Also controls the expression of proteases and carbohydrate-active enzymes. Involved in the resistance to oxidative stress. Required for full virulence. The chain is Developmental and secondary metabolism regulator VEL1 from Botryotinia fuckeliana (strain B05.10) (Noble rot fungus).